The following is a 251-amino-acid chain: Ubiquinone/menaquinone biosynthesis C-methyltransferase UbiE (251 aa).

S-adenosyl-L-methionine is bound by residues Thr-74, Asp-95, 123–124 (NA), and Ser-140.

Belongs to the class I-like SAM-binding methyltransferase superfamily. MenG/UbiE family.

It catalyses the reaction a 2-demethylmenaquinol + S-adenosyl-L-methionine = a menaquinol + S-adenosyl-L-homocysteine + H(+). The catalysed reaction is a 2-methoxy-6-(all-trans-polyprenyl)benzene-1,4-diol + S-adenosyl-L-methionine = a 5-methoxy-2-methyl-3-(all-trans-polyprenyl)benzene-1,4-diol + S-adenosyl-L-homocysteine + H(+). Its pathway is quinol/quinone metabolism; menaquinone biosynthesis; menaquinol from 1,4-dihydroxy-2-naphthoate: step 2/2. It functions in the pathway cofactor biosynthesis; ubiquinone biosynthesis. In terms of biological role, methyltransferase required for the conversion of demethylmenaquinol (DMKH2) to menaquinol (MKH2) and the conversion of 2-polyprenyl-6-methoxy-1,4-benzoquinol (DDMQH2) to 2-polyprenyl-3-methyl-6-methoxy-1,4-benzoquinol (DMQH2). The protein is Ubiquinone/menaquinone biosynthesis C-methyltransferase UbiE of Enterobacter sp. (strain 638).